The chain runs to 288 residues: MTLRIRTIARMTGIREATLRAWERRYGFPRPLRSEGNNYRVYSREEVEAVRRVARLIQEEGLSVSEAIAQVKTEPPREQPEAERLRERFWSSVGALEGDEVTRVLDDAQTVMDVEAYCDGFLLPLLREMGVRLDVAREHLASALIRQRLRQVYDALSPAPAGPRALLACPSGDHHEGGLLVLGIHLKRKGWRVTMLGADTPAAALQGACVQVRPDVVALSFVRARAPEEFASVLEDALRACAPFPVVVGGLGAREHLKAIFSLGAQYAESSEELVAIWNQVRNAQNRP.

One can recognise an HTH merR-type domain in the interval 2–73; sequence TLRIRTIARM…VSEAIAQVKT (72 aa). The segment at residues 5–24 is a DNA-binding region (H-T-H motif); the sequence is IRTIARMTGIREATLRAWER. Positions 162 to 288 constitute a B12-binding domain; sequence GPRALLACPS…NQVRNAQNRP (127 aa).

The protein belongs to the CarA/CarH B12-binding photoregulator family. In terms of assembly, forms homodimers or oligomers. Interacts with CarS.

Its activity is regulated as follows. Binds cobalamin (vitamin B12), but cobalamin is not required for CarA activity. Interaction with CarS prevents binding to DNA. In terms of biological role, negative regulator of the carB operon in the dark. Binds specifically to the CarA operator, in the region around the carB promoter, which blocks access to the RNA polymerase. The polypeptide is HTH-type transcriptional repressor CarA (carA) (Myxococcus xanthus).